We begin with the raw amino-acid sequence, 336 residues long: Mitochondrial thiamine pyrophosphate carrier 1 (336 aa).

Solcar repeat units follow at residues 11–98 (ISST…VNQV), 112–202 (SSGA…VKDS), and 221–323 (TKGW…SLSI). Transmembrane regions (helical) follow at residues 17-37 (MLCG…LDVV), 66-86 (GVTA…FYGA), 118-138 (FIAG…FDLF), 177-197 (GVSS…ASYG), 228-244 (TAGL…VFPL), and 298-315 (GFLV…ITMY).

This sequence belongs to the mitochondrial carrier (TC 2.A.29) family.

The protein resides in the mitochondrion inner membrane. Functionally, mitochondrial transporter that mediates uptake of thiamine pyrophosphate (ThPP) into mitochondria. The polypeptide is Mitochondrial thiamine pyrophosphate carrier 1 (TPC1) (Yarrowia lipolytica (strain CLIB 122 / E 150) (Yeast)).